The following is an 845-amino-acid chain: Beta-galactosidase 11 (845 aa).

The signal sequence occupies residues 1–26; that stretch reads MRKHSLDRWLLTAVLVVLLSSSSSFA. N-linked (GlcNAc...) asparagine glycosylation is present at asparagine 104. Residue glutamate 197 is the Proton donor of the active site. Glutamate 268 (nucleophile) is an active-site residue. N-linked (GlcNAc...) asparagine glycosylation is found at asparagine 269, asparagine 300, asparagine 395, asparagine 752, asparagine 784, and asparagine 814. Residues 751–840 form the SUEL-type lectin domain; that stretch reads DNVSLTATLK…KMLAVQVKCG (90 aa).

This sequence belongs to the glycosyl hydrolase 35 family.

The protein localises to the secreted. The protein resides in the extracellular space. It localises to the apoplast. It carries out the reaction Hydrolysis of terminal non-reducing beta-D-galactose residues in beta-D-galactosides.. This chain is Beta-galactosidase 11 (BGAL11), found in Arabidopsis thaliana (Mouse-ear cress).